A 248-amino-acid chain; its full sequence is Phycocyanobilin:ferredoxin oxidoreductase (248 aa).

It belongs to the HY2 family.

The enzyme catalyses (2R,3Z)-phycocyanobilin + 4 oxidized [2Fe-2S]-[ferredoxin] = biliverdin IXalpha + 4 reduced [2Fe-2S]-[ferredoxin] + 4 H(+). In terms of biological role, catalyzes the four-electron reduction of biliverdin IX-alpha (2-electron reduction at both the A and D rings); the reaction proceeds via an isolatable 2-electron intermediate, 181,182-dihydrobiliverdin. This is Phycocyanobilin:ferredoxin oxidoreductase (pcyA) from Synechocystis sp. (strain ATCC 27184 / PCC 6803 / Kazusa).